The sequence spans 419 residues: Putative trans-acting enoyl reductase MT2525 (419 aa).

Lys127 participates in a covalent cross-link: Isoglutamyl lysine isopeptide (Lys-Gln) (interchain with Q-Cter in protein Pup). The disordered stretch occupies residues 197–232; sequence NDPDARRQLSDPYMLSPDRGAEPELGPQPDLPSRRG. A helical membrane pass occupies residues 284-304; it reads VLAPVVSVVGGGVGNAMFGLA.

This sequence belongs to the saccharopine dehydrogenase family. Enoyl reductase subfamily.

The protein localises to the cell membrane. The sequence is that of Putative trans-acting enoyl reductase MT2525 from Mycobacterium tuberculosis (strain CDC 1551 / Oshkosh).